The chain runs to 441 residues: Protein FAM83A (441 aa).

Disordered stretches follow at residues 81–108 (SNDN…MNSD) and 312–368 (GMSI…SPLQ). Residues 314–327 (SIMSDSNPESINTT) show a composition bias toward polar residues. Positions 328-354 (SEPFSSISTASISNDSQRPKSPVSTTP) are enriched in low complexity.

Belongs to the FAM83 family.

It is found in the cytoplasm. Functionally, may function in the epidermal growth factor receptor/EGFR signaling pathway. The chain is Protein FAM83A from Xenopus tropicalis (Western clawed frog).